Here is a 249-residue protein sequence, read N- to C-terminus: 1-(5-phosphoribosyl)-5-[(5-phosphoribosylamino)methylideneamino] imidazole-4-carboxamide isomerase (249 aa).

Catalysis depends on Asp-8, which acts as the Proton acceptor. The active-site Proton donor is Asp-129.

This sequence belongs to the HisA/HisF family.

The protein localises to the cytoplasm. The catalysed reaction is 1-(5-phospho-beta-D-ribosyl)-5-[(5-phospho-beta-D-ribosylamino)methylideneamino]imidazole-4-carboxamide = 5-[(5-phospho-1-deoxy-D-ribulos-1-ylimino)methylamino]-1-(5-phospho-beta-D-ribosyl)imidazole-4-carboxamide. It participates in amino-acid biosynthesis; L-histidine biosynthesis; L-histidine from 5-phospho-alpha-D-ribose 1-diphosphate: step 4/9. This chain is 1-(5-phosphoribosyl)-5-[(5-phosphoribosylamino)methylideneamino] imidazole-4-carboxamide isomerase, found in Magnetococcus marinus (strain ATCC BAA-1437 / JCM 17883 / MC-1).